We begin with the raw amino-acid sequence, 298 residues long: MGKEVMVSDYGDDDGEDAGGGDEYRIPEWEIGLPNGDDLTPLSQYLVPSILALAFSMIPERSRTIHDVNRASQITLSSLRSSTNASSVMEEVVDRVESSVPGSDPKKQKKSDGGEAAAVEDSTAEEGDSGPEDASGKTSKRPRLVWTPQLHKRFVDVVAHLGIKNAVPKTIMQLMNVEGLTRENVASHLQKYRLYLKRIQGLTTEEDPYSSSDQLFSSTPVPPQSFQDGGGSNGKLGVPVPVPSMVPIPGYGNQMGMQGYYQQYSNHGNESNQYMMQQNKFGTMVTYPSVGGGDVNDK.

Disordered stretches follow at residues 1 to 26, 79 to 143, and 206 to 232; these read MGKE…EYRI, LRSS…KRPR, and EDPY…GGGS. Positions 10–20 are enriched in acidic residues; it reads YGDDDGEDAGG. Basic and acidic residues predominate over residues 104–113; that stretch reads DPKKQKKSDG. A compositionally biased stretch (acidic residues) spans 122 to 131; that stretch reads STAEEGDSGP. A DNA-binding region (myb-like GARP) is located at residues 138–197; it reads TSKRPRLVWTPQLHKRFVDVVAHLGIKNAVPKTIMQLMNVEGLTRENVASHLQKYRLYLK. The span at 209-227 shows a compositional bias: polar residues; the sequence is YSSSDQLFSSTPVPPQSFQ.

The protein resides in the nucleus. Functionally, transcription factor that is a critical component of the regulatory circuit of the circadian clock. Binds to specific sites on CCA1 promoter leading to CCA1 activation. Is required for the rhythmic expression of other clock genes such as LHY, GI and APRR1/TOC1. The polypeptide is Transcription factor BOA (BOA) (Arabidopsis thaliana (Mouse-ear cress)).